A 755-amino-acid polypeptide reads, in one-letter code: Diamine oxidase [copper-containing] (755 aa).

The signal sequence occupies residues 1-24 (MGRGTLALGWAGAALLLLQMLAAA). N115 carries N-linked (GlcNAc...) asparagine glycosylation. Cysteines 182 and 186 form a disulfide. The Proton acceptor role is filled by D376. An intrachain disulfide couples C394 to C420. The active-site Schiff-base intermediate with substrate; via topaquinone is Y464. Y464 bears the 2',4',5'-topaquinone mark. H513 and H515 together coordinate Cu(2+). Positions 522, 523, and 524 each coordinate Ca(2+). An N-linked (GlcNAc...) asparagine glycan is attached at N541. E565, F656, N659, E661, D667, and L668 together coordinate Ca(2+). Cu(2+) is bound at residue H678. Residue N749 is glycosylated (N-linked (GlcNAc...) asparagine).

It belongs to the copper/topaquinone oxidase family. In terms of assembly, homodimer; disulfide-linked. It depends on Cu(2+) as a cofactor. Ca(2+) is required as a cofactor. The cofactor is L-topaquinone. Post-translationally, topaquinone (TPQ) is generated by copper-dependent autoxidation of a specific tyrosyl residue. In terms of processing, N-glycosylated; the glycans are primarily linear, di-, or tribranched fucosylated complex type.

The protein resides in the secreted. The protein localises to the extracellular space. Its subcellular location is the cell membrane. It carries out the reaction histamine + O2 + H2O = imidazole-4-acetaldehyde + H2O2 + NH4(+). The enzyme catalyses N(tau)-methylhistamine + O2 + H2O = 1-methylimidazole-4-acetaldehyde + H2O2 + NH4(+). It catalyses the reaction putrescine + O2 + H2O = 4-aminobutanal + H2O2 + NH4(+). The catalysed reaction is cadaverine + O2 + H2O = 5-aminopentanal + H2O2 + NH4(+). Inhibited by amiloride and amiloride analogs. In terms of biological role, catalyzes the oxidative deamination of primary amines to the corresponding aldehydes with the concomitant production of hydrogen peroxide and ammonia. Its preferred substrates in vitro are the diamines histamine and 1-methylhistamine and it could therefore play a role in allergic and immune responses. Has a broad specificity for diamines and can also act on cadaverine and putrescine, two products of amino acid catabolism. It could also act on polyamines, like spermidine and spermine though less efficiently, and regulate various biological processes. The chain is Diamine oxidase [copper-containing] from Sus scrofa (Pig).